We begin with the raw amino-acid sequence, 610 residues long: Glutamine--fructose-6-phosphate aminotransferase [isomerizing] (610 aa).

Residue cysteine 2 is the Nucleophile; for GATase activity of the active site. In terms of domain architecture, Glutamine amidotransferase type-2 spans 2-219; that stretch reads CGIVGYAGKK…SGEWGYFSQN (218 aa). SIS domains are found at residues 287-431 and 459-600; these read SKDV…SDEE and MSSH…PDQP. Lysine 605 functions as the For Fru-6P isomerization activity in the catalytic mechanism.

Homodimer.

Its subcellular location is the cytoplasm. The enzyme catalyses D-fructose 6-phosphate + L-glutamine = D-glucosamine 6-phosphate + L-glutamate. Its function is as follows. Catalyzes the first step in hexosamine metabolism, converting fructose-6P into glucosamine-6P using glutamine as a nitrogen source. This chain is Glutamine--fructose-6-phosphate aminotransferase [isomerizing], found in Leptospira interrogans serogroup Icterohaemorrhagiae serovar copenhageni (strain Fiocruz L1-130).